Here is a 962-residue protein sequence, read N- to C-terminus: Integrator complex subunit 7 (962 aa).

A phosphoserine mark is found at serine 338 and serine 809.

The protein belongs to the Integrator subunit 7 family. Component of the Integrator complex, composed of core subunits INTS1, INTS2, INTS3, INTS4, INTS5, INTS6, INTS7, INTS8, INTS9/RC74, INTS10, INTS11/CPSF3L, INTS12, INTS13, INTS14 and INTS15. The core complex associates with protein phosphatase 2A subunits PPP2CA and PPP2R1A, to form the Integrator-PP2A (INTAC) complex. Interacts with NABP2.

The protein localises to the nucleus. Its subcellular location is the chromosome. The protein resides in the cytoplasm. In terms of biological role, component of the integrator complex, a multiprotein complex that terminates RNA polymerase II (Pol II) transcription in the promoter-proximal region of genes. The integrator complex provides a quality checkpoint during transcription elongation by driving premature transcription termination of transcripts that are unfavorably configured for transcriptional elongation: the complex terminates transcription by (1) catalyzing dephosphorylation of the C-terminal domain (CTD) of Pol II subunit POLR2A/RPB1 and SUPT5H/SPT5, (2) degrading the exiting nascent RNA transcript via endonuclease activity and (3) promoting the release of Pol II from bound DNA. The integrator complex is also involved in terminating the synthesis of non-coding Pol II transcripts, such as enhancer RNAs (eRNAs), small nuclear RNAs (snRNAs), telomerase RNAs and long non-coding RNAs (lncRNAs). May be not involved in the recruitment of cytoplasmic dynein to the nuclear envelope by different components of the INT complex. Plays a role in DNA damage response (DDR) signaling during the S phase. The polypeptide is Integrator complex subunit 7 (Homo sapiens (Human)).